Here is a 578-residue protein sequence, read N- to C-terminus: Arginine--tRNA ligase (578 aa).

Residues 127 to 137 carry the 'HIGH' region motif; the sequence is PNLAKEMHVGH.

It belongs to the class-I aminoacyl-tRNA synthetase family. As to quaternary structure, monomer.

The protein resides in the cytoplasm. It carries out the reaction tRNA(Arg) + L-arginine + ATP = L-arginyl-tRNA(Arg) + AMP + diphosphate. This Pseudomonas putida (strain ATCC 700007 / DSM 6899 / JCM 31910 / BCRC 17059 / LMG 24140 / F1) protein is Arginine--tRNA ligase.